The following is a 347-amino-acid chain: L-threonine 3-dehydrogenase (347 aa).

Position 42 (cysteine 42) interacts with Zn(2+). Residues threonine 44 and histidine 47 each act as charge relay system in the active site. Positions 67, 68, 97, 100, 103, and 111 each coordinate Zn(2+). Residues isoleucine 179, glutamate 199, arginine 204, 266–268 (LGL), and 291–292 (IT) contribute to the NAD(+) site.

This sequence belongs to the zinc-containing alcohol dehydrogenase family. In terms of assembly, homotetramer. It depends on Zn(2+) as a cofactor.

It localises to the cytoplasm. It carries out the reaction L-threonine + NAD(+) = (2S)-2-amino-3-oxobutanoate + NADH + H(+). The protein operates within amino-acid degradation; L-threonine degradation via oxydo-reductase pathway; glycine from L-threonine: step 1/2. Catalyzes the NAD(+)-dependent oxidation of L-threonine to 2-amino-3-ketobutyrate. In Caldanaerobacter subterraneus subsp. tengcongensis (strain DSM 15242 / JCM 11007 / NBRC 100824 / MB4) (Thermoanaerobacter tengcongensis), this protein is L-threonine 3-dehydrogenase.